The following is a 384-amino-acid chain: Probable L-tyrosine/L-aspartate decarboxylase (384 aa).

An N6-(pyridoxal phosphate)lysine modification is found at Lys-233.

The protein belongs to the group II decarboxylase family. MfnA subfamily. It depends on pyridoxal 5'-phosphate as a cofactor.

It catalyses the reaction L-tyrosine + H(+) = tyramine + CO2. It carries out the reaction L-aspartate + H(+) = beta-alanine + CO2. It functions in the pathway cofactor biosynthesis; methanofuran biosynthesis. The protein operates within cofactor biosynthesis; coenzyme A biosynthesis. Catalyzes the decarboxylation of L-tyrosine to produce tyramine for methanofuran biosynthesis. Can also catalyze the decarboxylation of L-aspartate to produce beta-alanine for coenzyme A (CoA) biosynthesis. This Methanococcus maripaludis (strain C5 / ATCC BAA-1333) protein is Probable L-tyrosine/L-aspartate decarboxylase.